A 256-amino-acid chain; its full sequence is Aspirochlorine biosynthesis protein F (256 aa).

An N-linked (GlcNAc...) asparagine glycan is attached at Asn19. 3 helical membrane passes run 21 to 41 (SITP…GPHF), 163 to 183 (LVWV…FFFT), and 214 to 234 (FGLG…ILAV).

It localises to the membrane. It functions in the pathway mycotoxin biosynthesis. Its function is as follows. Part of the gene cluster that mediates the biosynthesis of aspirochlorine (or antibiotic A30641), an unusual halogenated spiro compound with distinctive antifungal properties due to selective inhibition of protein biosynthesis, and which is also active against bacteria, viruses, and murine tumor cells. The non-ribosomal peptide synthetase (NRPS) aclP is responsible the formation of the diketopiperazine (DKP) core from the condensation of 2 phenylalanine residues. One Phe residue is tailored into chlorotyrosine by hydroxylation and chlorination, whereas the second Phe undergoes an unprecedented C-C bond cleavage to be converted into glycine. After formation of the DKP, sulfur is incorporated into the DKP by conjugation with glutathione by aclG, followed by its stepwise degradation to the thiol by aclI, aclJ and aclK, and the dithiol oxidation by aclT. In addition, oxygenases (aclB, aclC, aclL and aclO) and O-methyltransferases (aclM and aclU) act as tailoring enzymes to produce the intermediate dechloroaspirochlorine. Ultimately, chlorination of dechloroaspirochlorine by the halogenase aclH is the last step in the aspirochlorine pathway. The protein is Aspirochlorine biosynthesis protein F of Aspergillus oryzae (strain ATCC 42149 / RIB 40) (Yellow koji mold).